The sequence spans 456 residues: N(6)-adenosine-methyltransferase non-catalytic subunit METTL14 (456 aa).

The span at 39–51 (DEQREIAETRETS) shows a compositional bias: basic and acidic residues. Positions 39–74 (DEQREIAETRETSRASYDTSATVSKRKMPEEGEADE) are disordered. The segment covering 52-61 (RASYDTSATV) has biased composition (polar residues). Interaction with METTL3 regions lie at residues 135–136 (RD) and 237–238 (SG). A positively charged region required for RNA-binding region spans residues 245 to 254 (RMCLRKWGFR). Interaction with METTL3 regions lie at residues 255 to 258 (RSED) and 278 to 287 (KAIFQRTKEH). Residues 297 to 298 (HR) are positively charged region required for RNA-binding. Residues 308–312 (NVDID) are interaction with METTL3. Residues 395–456 (LRPKTPPPKS…GPHRGVFAPR (62 aa)) are disordered. Positions 410 to 421 (ASRGGGRGGPSA) are enriched in gly residues. The segment covering 423–441 (RGERGRERNRGSFRGDRGN) has biased composition (basic and acidic residues).

The protein belongs to the MT-A70-like family. Heterodimer; heterodimerizes with mettl3 to form an antiparallel heterodimer that constitutes an active methyltransferase. Component of the WMM complex, a N6-methyltransferase complex composed of a catalytic subcomplex, named MAC, and of an associated subcomplex, named MACOM. The MAC subcomplex is composed of mettl3 and mettl14.

It is found in the nucleus. The METTL3-METTL14 heterodimer forms a N6-methyltransferase complex that methylates adenosine residues at the N(6) position of some mRNAs and regulates the circadian clock, differentiation of embryonic stem cells and cortical neurogenesis. In the heterodimer formed with mettl3, mettl14 constitutes the RNA-binding scaffold that recognizes the substrate rather than the catalytic core. N6-methyladenosine (m6A), which takes place at the 5'-[AG]GAC-3' consensus sites of some mRNAs, plays a role in mRNA stability and processing. This Xenopus tropicalis (Western clawed frog) protein is N(6)-adenosine-methyltransferase non-catalytic subunit METTL14 (mettl14).